A 149-amino-acid polypeptide reads, in one-letter code: Deoxyuridine 5'-triphosphate nucleotidohydrolase (149 aa).

Residues 68–70 (RSG), asparagine 81, and 85–87 (LID) contribute to the substrate site.

The protein belongs to the dUTPase family. Mg(2+) serves as cofactor.

It catalyses the reaction dUTP + H2O = dUMP + diphosphate + H(+). Its pathway is pyrimidine metabolism; dUMP biosynthesis; dUMP from dCTP (dUTP route): step 2/2. Its function is as follows. This enzyme is involved in nucleotide metabolism: it produces dUMP, the immediate precursor of thymidine nucleotides and it decreases the intracellular concentration of dUTP so that uracil cannot be incorporated into DNA. This is Deoxyuridine 5'-triphosphate nucleotidohydrolase from Nitrosospira multiformis (strain ATCC 25196 / NCIMB 11849 / C 71).